Consider the following 293-residue polypeptide: uncharacterized protein (293 aa).

Residues 1–58 enclose the HTH lysR-type domain; sequence MQLQELHMLVVLAEELNMRKAAERLFVSQPALSQRLQTIEKAWGTKIFLRSQKGLTVT. The segment at residues 18–37 is a DNA-binding region (H-T-H motif); the sequence is MRKAAERLFVSQPALSQRLQ.

This sequence belongs to the LysR transcriptional regulatory family.

This is an uncharacterized protein from Bacillus subtilis (strain 168).